Reading from the N-terminus, the 254-residue chain is 5'-nucleotidase SurE (254 aa).

The a divalent metal cation site is built by Asp-8, Asp-9, Ser-39, and Asn-97.

It belongs to the SurE nucleotidase family. A divalent metal cation is required as a cofactor.

The protein localises to the cytoplasm. It catalyses the reaction a ribonucleoside 5'-phosphate + H2O = a ribonucleoside + phosphate. In terms of biological role, nucleotidase that shows phosphatase activity on nucleoside 5'-monophosphates. The chain is 5'-nucleotidase SurE from Alkaliphilus metalliredigens (strain QYMF).